The chain runs to 325 residues: tRNA dimethylallyltransferase (325 aa).

17–24 contributes to the ATP binding site; the sequence is GPTASGKT. 19–24 serves as a coordination point for substrate; the sequence is TASGKT. Interaction with substrate tRNA regions lie at residues 42–45, 166–170, 251–256, and 284–291; these read DSAL, QRIQR, RCVGYR, and KRQITWLR.

Belongs to the IPP transferase family. Monomer. It depends on Mg(2+) as a cofactor.

The catalysed reaction is adenosine(37) in tRNA + dimethylallyl diphosphate = N(6)-dimethylallyladenosine(37) in tRNA + diphosphate. Catalyzes the transfer of a dimethylallyl group onto the adenine at position 37 in tRNAs that read codons beginning with uridine, leading to the formation of N6-(dimethylallyl)adenosine (i(6)A). This Burkholderia multivorans (strain ATCC 17616 / 249) protein is tRNA dimethylallyltransferase.